Here is a 443-residue protein sequence, read N- to C-terminus: ATP-dependent protease ATPase subunit HslU (443 aa).

ATP-binding positions include Ile18, 60–65 (GVGKTE), Asp256, Glu321, and Arg393.

The protein belongs to the ClpX chaperone family. HslU subfamily. As to quaternary structure, a double ring-shaped homohexamer of HslV is capped on each side by a ring-shaped HslU homohexamer. The assembly of the HslU/HslV complex is dependent on binding of ATP.

It is found in the cytoplasm. Functionally, ATPase subunit of a proteasome-like degradation complex; this subunit has chaperone activity. The binding of ATP and its subsequent hydrolysis by HslU are essential for unfolding of protein substrates subsequently hydrolyzed by HslV. HslU recognizes the N-terminal part of its protein substrates and unfolds these before they are guided to HslV for hydrolysis. The chain is ATP-dependent protease ATPase subunit HslU from Nitrosospira multiformis (strain ATCC 25196 / NCIMB 11849 / C 71).